The chain runs to 290 residues: Sodium/potassium-transporting ATPase subunit beta-2 (290 aa).

Residues 1–39 lie on the Cytoplasmic side of the membrane; the sequence is MVIQKEKKSCGQVVEEWKEFVWNPRTHQFMGRTGTSWAF. The chain crosses the membrane as a helical; Signal-anchor for type II membrane protein span at residues 40-67; the sequence is ILLFYLVFYGFLTAMFSLTMWVMLQTVS. Residues 68–290 are Extracellular-facing; sequence DHTPKYQDRL…VAFKLRINKT (223 aa). N-linked (GlcNAc...) asparagine glycans are attached at residues Asn-96 and Asn-118. Cys-129 and Cys-150 form a disulfide bridge. An N-linked (GlcNAc...) asparagine glycan is attached at Asn-153. Cysteines 160 and 177 form a disulfide. N-linked (GlcNAc...) asparagine glycans are attached at residues Asn-193, Asn-197, Asn-220, and Asn-238. Positions 193 to 290 are immunoglobulin-like; that stretch reads NQSMNVTCVG…VAFKLRINKT (98 aa). Cys-200 and Cys-261 form a disulfide bridge.

It belongs to the X(+)/potassium ATPases subunit beta family. In terms of assembly, the sodium/potassium-transporting ATPase is composed of a catalytic alpha subunit, an auxiliary non-catalytic beta subunit and an additional regulatory subunit. Interacts with isoform 2 of BSG.

It localises to the cell membrane. Functionally, this is the non-catalytic component of the active enzyme, which catalyzes the hydrolysis of ATP coupled with the exchange of Na(+) and K(+) ions across the plasma membrane. The exact function of the beta-2 subunit is not known. Its function is as follows. Mediates cell adhesion of neurons and astrocytes, and promotes neurite outgrowth. This is Sodium/potassium-transporting ATPase subunit beta-2 (Atp1b2) from Mus musculus (Mouse).